The sequence spans 605 residues: DNA primase (605 aa).

A CHC2-type zinc finger spans residues 37 to 61; it reads CPFHADKNPSMHINPIKGFYHCFAC. Residues 248-329 form the Toprim domain; that stretch reads KEIIVCEGYM…DGKVAILQGG (82 aa). Mg(2+) is bound by residues E254, D298, and D300.

This sequence belongs to the DnaG primase family. In terms of assembly, monomer. Interacts with DnaB. Requires Zn(2+) as cofactor. The cofactor is Mg(2+).

It catalyses the reaction ssDNA + n NTP = ssDNA/pppN(pN)n-1 hybrid + (n-1) diphosphate.. Functionally, RNA polymerase that catalyzes the synthesis of short RNA molecules used as primers for DNA polymerase during DNA replication. In Campylobacter jejuni subsp. jejuni serotype O:2 (strain ATCC 700819 / NCTC 11168), this protein is DNA primase.